We begin with the raw amino-acid sequence, 387 residues long: Mannitol-1-phosphate 5-dehydrogenase (387 aa).

Position 3-14 (3-14 (ALHFGAGNIGRG)) interacts with NAD(+).

It belongs to the mannitol dehydrogenase family.

It carries out the reaction D-mannitol 1-phosphate + NAD(+) = beta-D-fructose 6-phosphate + NADH + H(+). This is Mannitol-1-phosphate 5-dehydrogenase from Yersinia pseudotuberculosis serotype IB (strain PB1/+).